The following is an 882-amino-acid chain: Formin-like protein 9 (882 aa).

The N-terminal stretch at 1-19 is a signal peptide; that stretch reads MGMAMRCVLVLFSVSPVLL. Residues 67–92 form a disordered region; that stretch reads SRGRRHKRYSEAPAPAPAPVPAHQAR. The helical transmembrane segment at 138-158 threads the bilayer; it reads IVALGVVGLCLVVLGVVIAAF. Disordered regions lie at residues 178-202, 293-316, and 401-471; these read RHGS…PDPL, THDS…LSPK, and TMTN…PLPR. A compositionally biased stretch (low complexity) spans 298–308; sequence SDSSYQSLSPD. The segment covering 427 to 441 has biased composition (pro residues); it reads KPAPPPPPQKNPPPN. The FH2 domain maps to 462-882; that stretch reads VGKDGSPLPR…QTLNLVLPLK (421 aa).

It belongs to the formin-like family. Class-I subfamily.

It is found in the membrane. The protein is Formin-like protein 9 (FH9) of Oryza sativa subsp. japonica (Rice).